The primary structure comprises 65 residues: Large ribosomal subunit protein bL32 (65 aa).

A compositionally biased stretch (basic residues) spans 1 to 18; that stretch reads MAVPKRRHSKSRTRKRRS. Positions 1 to 20 are disordered; the sequence is MAVPKRRHSKSRTRKRRSTY.

The protein belongs to the bacterial ribosomal protein bL32 family.

This is Large ribosomal subunit protein bL32 from Salinibacter ruber (strain DSM 13855 / M31).